The sequence spans 387 residues: Thermostable celloxylanase (387 aa).

Positions 41-382 (AEDIPSLAEA…KPAFWAIVDP (342 aa)) constitute a GH10 domain. Catalysis depends on Glu-185, which acts as the Proton donor. The active-site Nucleophile is the Glu-293.

The protein belongs to the glycosyl hydrolase 10 (cellulase F) family.

It carries out the reaction Endohydrolysis of (1-&gt;4)-beta-D-glucosidic linkages in cellulose, lichenin and cereal beta-D-glucans.. The catalysed reaction is Endohydrolysis of (1-&gt;4)-beta-D-xylosidic linkages in xylans.. It functions in the pathway glycan degradation; xylan degradation. Its function is as follows. Active toward xylan, carboxymethylcellulose, P-nitrophenyl-beta-D-xylopyranoside and P-nitrophenyl-beta-D-cellobioside. This chain is Thermostable celloxylanase (xynB), found in Thermoclostridium stercorarium (Clostridium stercorarium).